The sequence spans 217 residues: Flagellar L-ring protein 2 (217 aa).

An N-terminal signal peptide occupies residues 1–15 (MRILLALTWLAWLGA). The N-palmitoyl cysteine moiety is linked to residue Cys16. Cys16 is lipidated: S-diacylglycerol cysteine.

It belongs to the FlgH family. The basal body constitutes a major portion of the flagellar organelle and consists of four rings (L,P,S, and M) mounted on a central rod.

It localises to the cell outer membrane. The protein resides in the bacterial flagellum basal body. Assembles around the rod to form the L-ring and probably protects the motor/basal body from shearing forces during rotation. The protein is Flagellar L-ring protein 2 of Burkholderia thailandensis (strain ATCC 700388 / DSM 13276 / CCUG 48851 / CIP 106301 / E264).